We begin with the raw amino-acid sequence, 201 residues long: Adenylyl-sulfate kinase (201 aa).

35-42 (GLSGSGKS) contributes to the ATP binding site. Ser109 acts as the Phosphoserine intermediate in catalysis.

It belongs to the APS kinase family.

The enzyme catalyses adenosine 5'-phosphosulfate + ATP = 3'-phosphoadenylyl sulfate + ADP + H(+). The protein operates within sulfur metabolism; hydrogen sulfide biosynthesis; sulfite from sulfate: step 2/3. Functionally, catalyzes the synthesis of activated sulfate. The polypeptide is Adenylyl-sulfate kinase (Klebsiella pneumoniae (strain 342)).